Here is a 715-residue protein sequence, read N- to C-terminus: uncharacterized protein (715 aa).

A helical transmembrane segment spans residues 688-708; that stretch reads VWKFNPALYSTITNIFLLIIF.

The protein belongs to the plectrovirus ORF1 family.

Its subcellular location is the host membrane. This is an uncharacterized protein from Spiroplasma virus SpV1-R8A2 B (SpV1).